The chain runs to 191 residues: A-type ATP synthase subunit E (191 aa).

The protein belongs to the V-ATPase E subunit family. In terms of assembly, has multiple subunits with at least A(3), B(3), C, D, E, F, H, I and proteolipid K(x). Post-translationally, the N-terminus is blocked.

The protein resides in the cell membrane. Component of the A-type ATP synthase that produces ATP from ADP in the presence of a proton gradient across the membrane. The sequence is that of A-type ATP synthase subunit E from Sulfurisphaera tokodaii (strain DSM 16993 / JCM 10545 / NBRC 100140 / 7) (Sulfolobus tokodaii).